A 307-amino-acid polypeptide reads, in one-letter code: Aspartate carbamoyltransferase catalytic subunit (307 aa).

The carbamoyl phosphate site is built by Arg54 and Thr55. Lys83 provides a ligand contact to L-aspartate. Arg104, His132, and Gln135 together coordinate carbamoyl phosphate. L-aspartate contacts are provided by Arg165 and Arg228. Positions 267 and 268 each coordinate carbamoyl phosphate.

The protein belongs to the aspartate/ornithine carbamoyltransferase superfamily. ATCase family. In terms of assembly, heterododecamer (2C3:3R2) of six catalytic PyrB chains organized as two trimers (C3), and six regulatory PyrI chains organized as three dimers (R2).

The catalysed reaction is carbamoyl phosphate + L-aspartate = N-carbamoyl-L-aspartate + phosphate + H(+). It functions in the pathway pyrimidine metabolism; UMP biosynthesis via de novo pathway; (S)-dihydroorotate from bicarbonate: step 2/3. Its function is as follows. Catalyzes the condensation of carbamoyl phosphate and aspartate to form carbamoyl aspartate and inorganic phosphate, the committed step in the de novo pyrimidine nucleotide biosynthesis pathway. The sequence is that of Aspartate carbamoyltransferase catalytic subunit from Clostridium botulinum (strain ATCC 19397 / Type A).